Consider the following 482-residue polypeptide: MELRLYDTLTKEKRAFIPIDPSNVRMYVCGPTVYDFAHIGNARPVIVFDVLFRLLQHIYGTDHVTYVRNITDVDDKINDRAARDFPGLPLNEAIRKVTEKTAEQFQADVAALGCLPPTHQPRATEFVLPRDDGRADMVTLIKQLIARGHAYEAGGEVLFDVQSMPDYGALSGRRLEEQKAGARVAVDAHKRNPADFVLWKLSSENEPGWDSPWGRGRPGWHIECSAMSAAYLGDVFDIHGGGLDLIFPHHENEIAQSRCAHGTHTMANYWMHNGFLQVEGEKMSKSLGNFFTINELLTTEKFGGRKWPGEVLRLAMLKTHYRSPIDWTVDALEESKRILDSWYDIVGDDTEAIGEVDREVSAFLGDDLNTSAAVTRLHAIAASRIGKSGQLQIDAKRKLKVSAVMLGLLGRTKREYLETDPQVILVDSNLVAHLLSDRAAARARKDFKESDRIRDELAAMGVVLKDGKDADGKPETTWEIAR.

Cysteine 29 provides a ligand contact to Zn(2+). The 'HIGH' region motif lies at 31 to 41 (PTVYDFAHIGN). Residues cysteine 224, histidine 249, and glutamate 253 each contribute to the Zn(2+) site. A 'KMSKS' region motif is present at residues 282 to 286 (KMSKS). Lysine 285 is a binding site for ATP.

This sequence belongs to the class-I aminoacyl-tRNA synthetase family. In terms of assembly, monomer. It depends on Zn(2+) as a cofactor.

The protein resides in the cytoplasm. It carries out the reaction tRNA(Cys) + L-cysteine + ATP = L-cysteinyl-tRNA(Cys) + AMP + diphosphate. The chain is Cysteine--tRNA ligase from Nitrobacter hamburgensis (strain DSM 10229 / NCIMB 13809 / X14).